Consider the following 190-residue polypeptide: Small ribosomal subunit protein eS7B (190 aa).

S2 is subject to N-acetylserine. A phosphoserine mark is found at S10 and S31. Residues K83 and K84 each participate in a glycyl lysine isopeptide (Lys-Gly) (interchain with G-Cter in ubiquitin) cross-link.

This sequence belongs to the eukaryotic ribosomal protein eS7 family. Component of the small ribosomal subunit (SSU). Mature yeast ribosomes consist of a small (40S) and a large (60S) subunit. The 40S small subunit contains 1 molecule of ribosomal RNA (18S rRNA) and 33 different proteins (encoded by 57 genes). The large 60S subunit contains 3 rRNA molecules (25S, 5.8S and 5S rRNA) and 46 different proteins (encoded by 81 genes). Interacts with snoRNA U3. uS11 interacts with MPP10. Component of the ribosomal small subunit (SSU) processome composed of at least 40 protein subunits and snoRNA U3. In terms of processing, N-terminally acetylated by acetyltransferase NatA. Post-translationally, ubiquitinated at Lys-83 and Lys-84 in response to stalled ribosomes, leading to activation of the No-Go Decay (NGD) pathway: first monoubiquitinated by MOT2/NOT4, followed by formation by HEL2 of 'Lys-63'-linked polyubiquitin chains on monoubiquitin.

Its subcellular location is the cytoplasm. It is found in the nucleus. The protein localises to the nucleolus. In terms of biological role, component of the ribosome, a large ribonucleoprotein complex responsible for the synthesis of proteins in the cell. The small ribosomal subunit (SSU) binds messenger RNAs (mRNAs) and translates the encoded message by selecting cognate aminoacyl-transfer RNA (tRNA) molecules. The large subunit (LSU) contains the ribosomal catalytic site termed the peptidyl transferase center (PTC), which catalyzes the formation of peptide bonds, thereby polymerizing the amino acids delivered by tRNAs into a polypeptide chain. The nascent polypeptides leave the ribosome through a tunnel in the LSU and interact with protein factors that function in enzymatic processing, targeting, and the membrane insertion of nascent chains at the exit of the ribosomal tunnel. eS7 is involved in nucleolar processing of pre-18S ribosomal RNA and ribosome assembly. The protein is Small ribosomal subunit protein eS7B of Saccharomyces cerevisiae (strain ATCC 204508 / S288c) (Baker's yeast).